The primary structure comprises 354 residues: Replication factor C subunit 3 (354 aa).

Position 41-48 (41-48) interacts with ATP; that stretch reads GPSGSGKK.

This sequence belongs to the activator 1 small subunits family. Heterotetramer of subunits RFC2, RFC3, RFC4 and RFC5 that can form a complex with RFC1.

Its subcellular location is the nucleus. In terms of biological role, may be involved in DNA replication and thus regulate cell proliferation. The polypeptide is Replication factor C subunit 3 (RFC3) (Arabidopsis thaliana (Mouse-ear cress)).